A 359-amino-acid polypeptide reads, in one-letter code: DNA-directed RNA polymerase RPB3-11 homolog (359 aa).

It in the N-terminal section; belongs to the archaeal RpoD/eukaryotic RPB3 RNA polymerase subunit family. The protein in the C-terminal section; belongs to the archaeal RpoL/eukaryotic RPB11/RPC19 RNA polymerase subunit family. As to quaternary structure, part of the viral DNA-directed RNA polymerase that consists of 8 polII-like subunits (RPB1, RPB2, RPB3, RPB5, RPB6, RPB7, RPB9, RPB10), a capping enzyme and a termination factor.

The protein resides in the host cytoplasm. Its subcellular location is the virion. Its function is as follows. Component of the DNA-directed RNA polymerase (RNAP) that catalyzes the transcription in the cytoplasm of viral DNA into RNA using the four ribonucleoside triphosphates as substrates. In Ornithodoros (relapsing fever ticks), this protein is DNA-directed RNA polymerase RPB3-11 homolog.